Reading from the N-terminus, the 538-residue chain is Putative cysteine ligase BshC (538 aa).

Residues 460 to 484 adopt a coiled-coil conformation; it reads KINEQIELLERMLKRNVEKKHEVEL.

It belongs to the BshC family.

Functionally, involved in bacillithiol (BSH) biosynthesis. May catalyze the last step of the pathway, the addition of cysteine to glucosamine malate (GlcN-Mal) to generate BSH. The sequence is that of Putative cysteine ligase BshC from Bacillus thuringiensis subsp. konkukian (strain 97-27).